Reading from the N-terminus, the 445-residue chain is Phosphoglucosamine mutase (445 aa).

The Phosphoserine intermediate role is filled by Ser-102. 4 residues coordinate Mg(2+): Ser-102, Asp-241, Asp-243, and Asp-245. Phosphoserine is present on Ser-102.

It belongs to the phosphohexose mutase family. Mg(2+) serves as cofactor. Activated by phosphorylation.

It carries out the reaction alpha-D-glucosamine 1-phosphate = D-glucosamine 6-phosphate. Its function is as follows. Catalyzes the conversion of glucosamine-6-phosphate to glucosamine-1-phosphate. This is Phosphoglucosamine mutase from Salmonella choleraesuis (strain SC-B67).